The following is a 218-amino-acid chain: GCN5-related N-acetyltransferase 9 (218 aa).

The 148-residue stretch at 36-183 (SALLEATGSE…KEVTLEYPVT (148 aa)) folds into the N-acetyltransferase domain. Acetyl-CoA contacts are provided by residues 112 to 114 (MIA), 120 to 125 (GKGLGK), 152 to 154 (NTA), and Phe159.

Belongs to the acetyltransferase family. GNAT subfamily. As to quaternary structure, oligomer. Expressed throughout the plant.

It is found in the cytoplasm. The protein localises to the nucleus. The enzyme catalyses an N-terminal L-alpha-aminoacyl-[protein] + acetyl-CoA = N-terminal N(alpha)-acetyl-L-alpha-aminoacyl-[protein] + CoA + H(+). It carries out the reaction L-lysyl-[protein] + acetyl-CoA = N(6)-acetyl-L-lysyl-[protein] + CoA + H(+). Probable protein acetyltransferase with dual specificity triggering both N-alpha-acetylation (NTA) and epsilon-lysine acetylation (KA). In Arabidopsis thaliana (Mouse-ear cress), this protein is GCN5-related N-acetyltransferase 9.